The sequence spans 311 residues: Methionyl-tRNA formyltransferase (311 aa).

110–113 contacts (6S)-5,6,7,8-tetrahydrofolate; it reads SLLP.

Belongs to the Fmt family.

The catalysed reaction is L-methionyl-tRNA(fMet) + (6R)-10-formyltetrahydrofolate = N-formyl-L-methionyl-tRNA(fMet) + (6S)-5,6,7,8-tetrahydrofolate + H(+). In terms of biological role, attaches a formyl group to the free amino group of methionyl-tRNA(fMet). The formyl group appears to play a dual role in the initiator identity of N-formylmethionyl-tRNA by promoting its recognition by IF2 and preventing the misappropriation of this tRNA by the elongation apparatus. The protein is Methionyl-tRNA formyltransferase of Streptococcus pneumoniae (strain JJA).